Consider the following 1095-residue polypeptide: Putative patatin-like phospholipase domain-containing protein M110.7 (1095 aa).

The chain crosses the membrane as a helical span at residues 9 to 29 (LLLIFENILELCMCITLVILI). The segment at 75 to 113 (HKKRSSKEEMTPDKKRDSSEKISKQPPRELFEPNEQEQV) is disordered. Positions 80 to 105 (SKEEMTPDKKRDSSEKISKQPPRELF) are enriched in basic and acidic residues. Residues 144-237 (VETL…LTSF), 327-416 (RKYE…IQFL), and 450-509 (IETG…TVMA) contribute to the a nucleoside 3',5'-cyclic phosphate site. A PNPLA domain is found at 768–935 (IVFGGGGARG…VNNLPADIMR (168 aa)). The short motif at 772-777 (GGGARG) is the GXGXXG element. Positions 799-803 (GTSIG) match the GXSXG motif. The active-site Nucleophile is the serine 801. Residue aspartate 922 is the Proton acceptor of the active site. The DGA/G signature appears at 922 to 924 (DGA).

Belongs to the NTE family.

The protein localises to the membrane. This chain is Putative patatin-like phospholipase domain-containing protein M110.7, found in Caenorhabditis elegans.